The following is an 839-amino-acid chain: Elongation factor 2 (839 aa).

The tr-type G domain maps to E17–F248. GTP is bound by residues A26–T33, N156–D159, and S211–L213. Residue H698 is modified to Diphthamide.

This sequence belongs to the TRAFAC class translation factor GTPase superfamily. Classic translation factor GTPase family. EF-G/EF-2 subfamily. Phosphorylation by EF-2 kinase completely inactivates EF-2.

Its subcellular location is the cytoplasm. The enzyme catalyses GTP + H2O = GDP + phosphate + H(+). In terms of biological role, catalyzes the GTP-dependent ribosomal translocation step during translation elongation. During this step, the ribosome changes from the pre-translocational (PRE) to the post-translocational (POST) state as the newly formed A-site-bound peptidyl-tRNA and P-site-bound deacylated tRNA move to the P and E sites, respectively. Catalyzes the coordinated movement of the two tRNA molecules, the mRNA and conformational changes in the ribosome. The protein is Elongation factor 2 (efbA) of Dictyostelium discoideum (Social amoeba).